The following is a 504-amino-acid chain: Maturase K (504 aa).

It belongs to the intron maturase 2 family. MatK subfamily.

Its subcellular location is the plastid. It is found in the chloroplast. Usually encoded in the trnK tRNA gene intron. Probably assists in splicing its own and other chloroplast group II introns. The sequence is that of Maturase K from Hamamelis japonica (Japanese witch hazel).